A 280-amino-acid chain; its full sequence is Tryptophan 2,3-dioxygenase (280 aa).

Substrate is bound by residues 49–53 (FIIIH), Y111, and R115. Heme is bound at residue H238. T252 provides a ligand contact to substrate.

This sequence belongs to the tryptophan 2,3-dioxygenase family. Homotetramer. It depends on heme as a cofactor.

The catalysed reaction is L-tryptophan + O2 = N-formyl-L-kynurenine. The protein operates within amino-acid degradation; L-tryptophan degradation via kynurenine pathway; L-kynurenine from L-tryptophan: step 1/2. Heme-dependent dioxygenase that catalyzes the oxidative cleavage of the L-tryptophan (L-Trp) pyrrole ring and converts L-tryptophan to N-formyl-L-kynurenine. Catalyzes the oxidative cleavage of the indole moiety. This is Tryptophan 2,3-dioxygenase from Geobacillus thermodenitrificans (strain NG80-2).